A 422-amino-acid chain; its full sequence is Protein UmuC (422 aa).

The UmuC domain maps to 2–188 (FALCDVNAFY…LPVDDVWGIG (187 aa)).

This sequence belongs to the DNA polymerase type-Y family.

Functionally, involved in UV protection and mutation. Poorly processive, error-prone DNA polymerase involved in translesion repair. Essential for induced (or SOS) mutagenesis. Able to replicate DNA across DNA lesions (thymine photodimers and abasic sites, translesion synthesis) in the presence of activated RecA; efficiency is maximal in the presence of the beta sliding-clamp and clamp-loading complex of DNA polymerase III plus single-stranded binding protein (SSB). RecA and to a lesser extent the beta clamp-complex may target Pol V to replication complexes stalled at DNA template lesions. The polypeptide is Protein UmuC (umuC) (Escherichia coli (strain K12)).